The following is an 858-amino-acid chain: G2-specific protein kinase nim-1 (858 aa).

Residues 7–290 form the Protein kinase domain; sequence YELLEKIGHG…TATLLNLPIV (284 aa). Residues 13 to 21 and Lys-36 each bind ATP; that span reads IGHGSFGII. The Proton acceptor role is filled by Asp-161. Thr-194 bears the Phosphothreonine; by autocatalysis mark. Residues 291–383 are a coiled coil; it reads RLMRKEKEVV…QARVEAELQR (93 aa). 2 disordered regions span residues 495-693 and 747-858; these read TKAP…LPQA and SAVD…LSQS. The segment covering 516-525 has biased composition (basic and acidic residues); that stretch reads SNWEVPRETE. A compositionally biased stretch (acidic residues) spans 526–535; sequence MIDSGDESEA. Composition is skewed to polar residues over residues 548–572 and 580–598; these read SSKNPFSTVTTRSRPSLNSQQNSNV and SKQTLATRSKTVSGVSSIG. Residues 636-648 show a composition bias toward low complexity; that stretch reads SANNINNSSNGGS. Positions 650–661 are enriched in polar residues; that stretch reads APSSTVTSNITV. The segment covering 676-691 has biased composition (low complexity); the sequence is SSFSQQQNNQPQQSLP. Residues 760 to 780 are compositionally biased toward polar residues; that stretch reads GQSQLPTRPRSQPQPITANFE. Residues 781–802 show a composition bias toward low complexity; sequence QQQQQQQSNTNSISSSNSAGSG.

This sequence belongs to the protein kinase superfamily. CAMK Ser/Thr protein kinase family.

It localises to the nucleus. It carries out the reaction L-seryl-[protein] + ATP = O-phospho-L-seryl-[protein] + ADP + H(+). The catalysed reaction is L-threonyl-[protein] + ATP = O-phospho-L-threonyl-[protein] + ADP + H(+). Functionally, protein kinase that plays an important role in mitotic regulation. This chain is G2-specific protein kinase nim-1 (nim-1), found in Neurospora crassa (strain ATCC 24698 / 74-OR23-1A / CBS 708.71 / DSM 1257 / FGSC 987).